The following is a 330-amino-acid chain: Cyclin-dependent kinase 7 (330 aa).

In terms of domain architecture, Protein kinase spans 5-289 (YDTIKHLGEG…CTQSLQMEYF (285 aa)). ATP contacts are provided by residues 11–19 (LGEGQFANV) and Lys-34. The active-site Proton acceptor is Asp-130. The residue at position 163 (Thr-163) is a Phosphothreonine. A disordered region spans residues 305–330 (KKQQPQKRSRRLDDDGTRPVRRLNFD). The span at 315-330 (RLDDDGTRPVRRLNFD) shows a compositional bias: basic and acidic residues.

Belongs to the protein kinase superfamily. CMGC Ser/Thr protein kinase family. CDC2/CDKX subfamily. In terms of assembly, catalytic component which, in association with cyclin H (cyh-1) and mat1, is likely to form the CAK complex.

It carries out the reaction L-seryl-[protein] + ATP = O-phospho-L-seryl-[protein] + ADP + H(+). It catalyses the reaction L-threonyl-[protein] + ATP = O-phospho-L-threonyl-[protein] + ADP + H(+). The enzyme catalyses [DNA-directed RNA polymerase] + ATP = phospho-[DNA-directed RNA polymerase] + ADP + H(+). Serine/threonine kinase involved in cell cycle control and in RNA polymerase II-mediated RNA transcription. Required for maintaining chromosome ploidy. May phosphorylate the large subunit of RNA polymerase II, ama-1. This is Cyclin-dependent kinase 7 from Caenorhabditis elegans.